The sequence spans 488 residues: Phenylalanine--tRNA ligase alpha subunit (488 aa).

L-phenylalanine is bound by residues Thr315, 354–356, Phe394, and Phe419; that span reads QLD.

This sequence belongs to the class-II aminoacyl-tRNA synthetase family. Phe-tRNA synthetase alpha subunit type 2 subfamily. As to quaternary structure, tetramer of two alpha and two beta subunits. Requires Mg(2+) as cofactor.

It localises to the cytoplasm. The catalysed reaction is tRNA(Phe) + L-phenylalanine + ATP = L-phenylalanyl-tRNA(Phe) + AMP + diphosphate + H(+). This chain is Phenylalanine--tRNA ligase alpha subunit, found in Pyrobaculum calidifontis (strain DSM 21063 / JCM 11548 / VA1).